Reading from the N-terminus, the 1003-residue chain is SWI/SNF-related matrix-associated actin-dependent regulator of chromatin subfamily A containing DEAD/H box 1 (1003 aa).

3 disordered regions span residues 15–130, 172–235, and 274–351; these read KKID…SKYK, GSSR…HFPD, and AKKE…EDYS. Composition is skewed to basic and acidic residues over residues 172–188, 221–235, and 274–294; these read GSSR…DSSP, KQEA…HFPD, and AKKE…DNKS. The CUE domain maps to 221-264; sequence KQEASVKKLQRHFPDLDKEELREVLQEHDWSFHEALEALKLFAE. The segment covering 295–311 has biased composition (low complexity); that stretch reads SAKAKANQNSNKAMAQN. Positions 321–333 are enriched in basic and acidic residues; the sequence is KYSENAKRDTRDL. In terms of domain architecture, Helicase ATP-binding spans 486 to 654; that stretch reads ALLHKHKVNM…MSLLNFVMPH (169 aa). 499–506 lines the ATP pocket; that stretch reads DEMGLGKT. Residues 605–608 carry the DEGH box motif; it reads DEGH. In terms of domain architecture, Helicase C-terminal spans 835–997; sequence ILEKLLSDIK…TIPLDMATLL (163 aa).

The protein belongs to the SNF2/RAD54 helicase family.

Its subcellular location is the nucleus. The protein resides in the chromosome. The enzyme catalyses ATP + H2O = ADP + phosphate + H(+). In terms of biological role, DNA helicase that possesses intrinsic ATP-dependent nucleosome-remodeling activity and is both required for DNA repair and heterochromatin organization. Promotes DNA end resection of double-strand breaks (DSBs) following DNA damage: probably acts by weakening histone DNA interactions in nucleosomes flanking DSBs. Required for the restoration of heterochromatin organization after replication. This is SWI/SNF-related matrix-associated actin-dependent regulator of chromatin subfamily A containing DEAD/H box 1 (smarcad1) from Xenopus tropicalis (Western clawed frog).